The primary structure comprises 611 residues: UvrABC system protein C (611 aa).

The GIY-YIG domain maps to 14–91 (TSPGCYIHKD…IKENKPKYNI (78 aa)). Residues 196–231 (DQIIEDLRGKMAGAAQTMEFEKAAEYRDLIQSIGTL) form the UVR domain.

Belongs to the UvrC family. As to quaternary structure, interacts with UvrB in an incision complex.

The protein resides in the cytoplasm. In terms of biological role, the UvrABC repair system catalyzes the recognition and processing of DNA lesions. UvrC both incises the 5' and 3' sides of the lesion. The N-terminal half is responsible for the 3' incision and the C-terminal half is responsible for the 5' incision. This is UvrABC system protein C from Streptococcus gordonii (strain Challis / ATCC 35105 / BCRC 15272 / CH1 / DL1 / V288).